We begin with the raw amino-acid sequence, 310 residues long: Pseudouridine-5'-phosphate glycosidase (310 aa).

E26 functions as the Proton donor in the catalytic mechanism. The substrate site is built by K87 and V107. Residue D139 coordinates Mn(2+). Residue 141–143 participates in substrate binding; sequence SAD. The active-site Nucleophile is the K160.

Belongs to the pseudouridine-5'-phosphate glycosidase family. In terms of assembly, homotrimer. Mn(2+) is required as a cofactor.

The catalysed reaction is D-ribose 5-phosphate + uracil = psi-UMP + H2O. Functionally, catalyzes the reversible cleavage of pseudouridine 5'-phosphate (PsiMP) to ribose 5-phosphate and uracil. Functions biologically in the cleavage direction, as part of a pseudouridine degradation pathway. This chain is Pseudouridine-5'-phosphate glycosidase, found in Roseobacter denitrificans (strain ATCC 33942 / OCh 114) (Erythrobacter sp. (strain OCh 114)).